The chain runs to 211 residues: uncharacterized protein (211 aa).

An N-terminal signal peptide occupies residues 1 to 20; sequence MSRVQISTVLAIDTATPAVT.

It to M.leprae ML0378.

This is an uncharacterized protein from Mycobacterium tuberculosis (strain CDC 1551 / Oshkosh).